We begin with the raw amino-acid sequence, 190 residues long: Signal peptidase complex subunit 3 (190 aa).

Residues 1 to 9 (MFNIVTRFQ) lie on the Cytoplasmic side of the membrane. The helical; Signal-anchor for type II membrane protein transmembrane segment at 10-32 (YAANQALTSSIIIAGIVIVSSLL) threads the bilayer. Over 33-190 (QLYSNNAWSL…EYVDKKKEQK (158 aa)) the chain is Lumenal.

This sequence belongs to the SPCS3 family. As to quaternary structure, component of the signal peptidase complex (SPC) composed of a catalytic subunit SEC11 and three accessory subunits SPC1, SPC2 and SPC3. The complex induces a local thinning of the ER membrane which is used to measure the length of the signal peptide (SP) h-region of protein substrates. This ensures the selectivity of the complex towards h-regions shorter than 18-20 amino acids. SPC associates with the translocon complex.

It is found in the endoplasmic reticulum membrane. Its function is as follows. Essential component of the signal peptidase complex (SPC) which catalyzes the cleavage of N-terminal signal sequences from nascent proteins as they are translocated into the lumen of the endoplasmic reticulum. Essential for the SPC catalytic activity, possibly by stabilizing and positioning the active center of the complex close to the lumenal surface. Essential for viability. The chain is Signal peptidase complex subunit 3 (SPC3) from Debaryomyces hansenii (strain ATCC 36239 / CBS 767 / BCRC 21394 / JCM 1990 / NBRC 0083 / IGC 2968) (Yeast).